Here is a 28-residue protein sequence, read N- to C-terminus: Grammistin Gs A (28 aa).

The protein belongs to the grammistin family. Group 3 subfamily. Exists as aggregates of 3-4 molecules. Expressed by the skin glands.

It localises to the secreted. In terms of biological role, thanks to its amphiphilic alpha-helice(s), it may integrate into membrane phospholipids, leading to lysis of the membrane. Has no substantial hemolytic activity. Has antibacterial activity with a broad spectrum against various species of bacteria including both Gram-positive and Gram-negative groups. This chain is Grammistin Gs A, found in Grammistes sexlineatus (Goldenstriped soapfish).